Here is a 78-residue protein sequence, read N- to C-terminus: D-alanyl carrier protein (78 aa).

Positions 1-78 (MAFRENVLEI…MIITQLEALK (78 aa)) constitute a Carrier domain. At Ser-36 the chain carries O-(pantetheine 4'-phosphoryl)serine.

Belongs to the DltC family. Post-translationally, 4'-phosphopantetheine is transferred from CoA to a specific serine of apo-DCP.

It is found in the cytoplasm. Its pathway is cell wall biogenesis; lipoteichoic acid biosynthesis. Carrier protein involved in the D-alanylation of lipoteichoic acid (LTA). The loading of thioester-linked D-alanine onto DltC is catalyzed by D-alanine--D-alanyl carrier protein ligase DltA. The DltC-carried D-alanyl group is further transferred to cell membrane phosphatidylglycerol (PG) by forming an ester bond, probably catalyzed by DltD. D-alanylation of LTA plays an important role in modulating the properties of the cell wall in Gram-positive bacteria, influencing the net charge of the cell wall. The chain is D-alanyl carrier protein from Listeria monocytogenes serotype 4a (strain HCC23).